The sequence spans 110 residues: Small ribosomal subunit protein bS16 (110 aa).

The segment at 84–110 is disordered; it reads KRAPRNNPEKAVPRKERKAAAEAAAKA. Residues 90-103 are compositionally biased toward basic and acidic residues; it reads NPEKAVPRKERKAA.

Belongs to the bacterial ribosomal protein bS16 family.

The protein is Small ribosomal subunit protein bS16 of Afipia carboxidovorans (strain ATCC 49405 / DSM 1227 / KCTC 32145 / OM5) (Oligotropha carboxidovorans).